Reading from the N-terminus, the 286-residue chain is Homoserine kinase (286 aa).

Pro-78–Ser-88 contacts ATP.

This sequence belongs to the GHMP kinase family. Homoserine kinase subfamily.

The protein localises to the cytoplasm. It carries out the reaction L-homoserine + ATP = O-phospho-L-homoserine + ADP + H(+). It functions in the pathway amino-acid biosynthesis; L-threonine biosynthesis; L-threonine from L-aspartate: step 4/5. Catalyzes the ATP-dependent phosphorylation of L-homoserine to L-homoserine phosphate. This Limosilactobacillus fermentum (strain NBRC 3956 / LMG 18251) (Lactobacillus fermentum) protein is Homoserine kinase.